Here is a 45-residue protein sequence, read N- to C-terminus: Major cold shock protein (45 aa).

Residues glutamate 1 to arginine 45 enclose the CSD domain.

As to quaternary structure, homodimer.

It is found in the cytoplasm. This Streptococcus pyogenes protein is Major cold shock protein (cspA).